The primary structure comprises 105 residues: Large ribosomal subunit protein uL18c (105 aa).

The protein belongs to the universal ribosomal protein uL18 family. Part of the 50S ribosomal subunit; contacts the 5S rRNA.

It localises to the plastid. It is found in the chloroplast. Functionally, binds 5S rRNA, forms part of the central protuberance of the 50S subunit. In Gracilaria tenuistipitata var. liui (Red alga), this protein is Large ribosomal subunit protein uL18c (rpl18).